A 249-amino-acid polypeptide reads, in one-letter code: Long form salivary protein D7L (249 aa).

The N-terminal stretch at 1–19 (MNAVITSLVFISLVGVGYS) is a signal peptide. 2 cysteine pairs are disulfide-bonded: Cys-36-Cys-66 and Cys-62-Cys-112. Trp-49 contributes to the thromboxane A2 binding site. Trp-52 contributes to the leukotriene C4 binding site. A thromboxane A2-binding site is contributed by Tyr-63. Leukotriene C4 is bound by residues Gly-136 and Lys-154. Position 154 (Lys-154) interacts with thromboxane A2. 3 cysteine pairs are disulfide-bonded: Cys-162/Cys-178, Cys-174/Cys-221, and Cys-211/Cys-230.

It belongs to the PBP/GOBP family.

The protein resides in the secreted. In terms of biological role, modulates blood feeding of female sandflies on vertebrate species by binding and sequestering different mediators involved in the host response. Binds leukotriene C4, leukotriene D4, leukotriene E4 and U-46619, a stable analog of thromboxane A2. Does not bind histamine or serotonin. Inhibits platelet aggregation induced by low concentrations of collagen in thromboxane A2-dependent manner. This chain is Long form salivary protein D7L, found in Phlebotomus duboscqi (Sandfly).